The sequence spans 216 residues: Uracil phosphoribosyltransferase (216 aa).

Residues Arg85, Arg110, and 135-143 (DPMVATGYS) each bind 5-phospho-alpha-D-ribose 1-diphosphate. Uracil-binding positions include Ile200 and 205–207 (GDA). A 5-phospho-alpha-D-ribose 1-diphosphate-binding site is contributed by Asp206.

Belongs to the UPRTase family. The cofactor is Mg(2+).

It carries out the reaction UMP + diphosphate = 5-phospho-alpha-D-ribose 1-diphosphate + uracil. The protein operates within pyrimidine metabolism; UMP biosynthesis via salvage pathway; UMP from uracil: step 1/1. Its activity is regulated as follows. Allosterically activated by GTP. Catalyzes the conversion of uracil and 5-phospho-alpha-D-ribose 1-diphosphate (PRPP) to UMP and diphosphate. This Burkholderia cenocepacia (strain ATCC BAA-245 / DSM 16553 / LMG 16656 / NCTC 13227 / J2315 / CF5610) (Burkholderia cepacia (strain J2315)) protein is Uracil phosphoribosyltransferase.